The following is a 448-amino-acid chain: N-succinylarginine dihydrolase (448 aa).

Substrate contacts are provided by residues 19–28, Asn110, and 137–138; these read AGLSSGNIAS and HR. Glu174 is a catalytic residue. Arg216 is a substrate binding site. His252 is a catalytic residue. The substrate site is built by Asp254 and Asn366. Cys372 functions as the Nucleophile in the catalytic mechanism.

Belongs to the succinylarginine dihydrolase family. As to quaternary structure, homodimer.

The enzyme catalyses N(2)-succinyl-L-arginine + 2 H2O + 2 H(+) = N(2)-succinyl-L-ornithine + 2 NH4(+) + CO2. Its pathway is amino-acid degradation; L-arginine degradation via AST pathway; L-glutamate and succinate from L-arginine: step 2/5. Its function is as follows. Catalyzes the hydrolysis of N(2)-succinylarginine into N(2)-succinylornithine, ammonia and CO(2). The sequence is that of N-succinylarginine dihydrolase from Legionella pneumophila (strain Lens).